We begin with the raw amino-acid sequence, 160 residues long: MNDDKTERPVKTANQRGAARLAAVQALYQMDVGGTGVLEIVAEYEAHRLGQEIDGATYLKADAGWFRSIVSGVVRDQVRLDPLIAVALQDDWALSRLDSTVRAILRAGVFELLDRKDVPVAVIVTEYVEIARAFFDDDEPKLVNAVLDRIAKQVRGEAKK.

Belongs to the NusB family.

In terms of biological role, involved in transcription antitermination. Required for transcription of ribosomal RNA (rRNA) genes. Binds specifically to the boxA antiterminator sequence of the ribosomal RNA (rrn) operons. This Rhizobium etli (strain ATCC 51251 / DSM 11541 / JCM 21823 / NBRC 15573 / CFN 42) protein is Transcription antitermination protein NusB.